A 206-amino-acid chain; its full sequence is Delta and osm-11 homolog protein 1 (206 aa).

The chain is Delta and osm-11 homolog protein 1 (dos-1) from Caenorhabditis elegans.